The chain runs to 65 residues: Small ribosomal subunit protein eS27 (65 aa).

Zn(2+) contacts are provided by cysteine 21, cysteine 24, cysteine 40, and cysteine 43. Residues 21-43 form a C4-type zinc finger; that stretch reads CKDCGNVQVVFARPSSVVTCNIC.

Belongs to the eukaryotic ribosomal protein eS27 family. Part of the 30S ribosomal subunit. Zn(2+) is required as a cofactor.

The sequence is that of Small ribosomal subunit protein eS27 from Thermoplasma volcanium (strain ATCC 51530 / DSM 4299 / JCM 9571 / NBRC 15438 / GSS1).